Consider the following 378-residue polypeptide: Transmembrane 6 superfamily member 2 (378 aa).

9 helical membrane passes run 34–54 (LCVV…VYSL), 63–83 (PLYA…VIAL), 110–130 (IFIC…MAGA), 140–160 (LGLY…PGNI), 170–190 (PTFF…MRIF), 219–239 (LTLI…GLVV), 269–289 (MLMY…ALTF), 291–311 (GCSW…QAQF), and 332–352 (TWAT…LLAL). EXPERA domains lie at 61–186 (YDPL…CWAG) and 217–351 (ADLT…HLLA).

It belongs to the TM6SF family.

The protein resides in the endoplasmic reticulum membrane. The protein localises to the endoplasmic reticulum-Golgi intermediate compartment membrane. Its function is as follows. Regulator of liver fat metabolism influencing triglyceride secretion and hepatic lipid droplet content. May function as sterol isomerase. This chain is Transmembrane 6 superfamily member 2 (Tm6sf2), found in Rattus norvegicus (Rat).